A 96-amino-acid chain; its full sequence is Exodeoxyribonuclease 7 small subunit (96 aa).

Residues 73-96 are disordered; that stretch reads RAPEQSAANDVSAPGSAEEHDHGR.

Belongs to the XseB family. In terms of assembly, heterooligomer composed of large and small subunits.

The protein localises to the cytoplasm. It catalyses the reaction Exonucleolytic cleavage in either 5'- to 3'- or 3'- to 5'-direction to yield nucleoside 5'-phosphates.. Bidirectionally degrades single-stranded DNA into large acid-insoluble oligonucleotides, which are then degraded further into small acid-soluble oligonucleotides. This chain is Exodeoxyribonuclease 7 small subunit, found in Acidothermus cellulolyticus (strain ATCC 43068 / DSM 8971 / 11B).